The primary structure comprises 164 residues: Nucleotide-binding protein Mfla_1706 (164 aa).

This sequence belongs to the YajQ family.

In terms of biological role, nucleotide-binding protein. This is Nucleotide-binding protein Mfla_1706 from Methylobacillus flagellatus (strain ATCC 51484 / DSM 6875 / VKM B-1610 / KT).